The primary structure comprises 605 residues: Alpha-1,3-galactosidase B (605 aa).

The first 19 residues, 1-19 (MKRIIFNFCFVWLAVSAFA), serve as a signal peptide directing secretion. 3 PbH1 repeats span residues 428–450 (CPEV…LFST), 451–473 (PLKT…LLCG), and 484–538 (CRNV…VIED).

The protein belongs to the glycosyl hydrolase 110 family. B subfamily.

The enzyme catalyses Hydrolysis of terminal, non-reducing branched (1-&gt;3)-alpha-D-galactosidic residues, producing free D-galactose.. It carries out the reaction Hydrolysis of terminal, non-reducing linear (1-&gt;3)-alpha-D-galactosidic residues, producing free D-galactose.. The catalysed reaction is Hydrolysis of terminal, non-reducing alpha-D-galactose residues in alpha-D-galactosides, including galactose oligosaccharides, galactomannans and galactolipids.. In terms of biological role, alpha-galactosidase. Removes both branched alpha-1,3-linked galactose residues of blood group B antigens and linear alpha-1,3-linked galactose structures. This is Alpha-1,3-galactosidase B (glaB2) from Phocaeicola vulgatus (strain ATCC 8482 / DSM 1447 / JCM 5826 / CCUG 4940 / NBRC 14291 / NCTC 11154) (Bacteroides vulgatus).